An 859-amino-acid polypeptide reads, in one-letter code: ATP-dependent RNA helicase DDX24 (859 aa).

The residue at position 17 (Lys17) is an N6-acetyllysine. At Ser60 the chain carries Phosphoserine. Residues 61 to 175 (PAKNPSSLFS…SQSTAAKVPK (115 aa)) are disordered. N6-acetyllysine is present on Lys71. Residues Ser82 and Ser94 each carry the phosphoserine modification. Acidic residues predominate over residues 82 to 91 (SEEEEEEEGE). Over residues 95-105 (PKKKIKLKKSK) the composition is skewed to basic residues. Positions 106-115 (NVATEGTSTQ) are enriched in polar residues. The Q motif signature appears at 192 to 220 (SAWKDLFVPRPVLRALSFLGFSAPTPIQV). The region spanning 224-528 (APAIRDKLDI…RILHKKHTKK (305 aa)) is the Helicase ATP-binding domain. 237-244 (AETGSGKT) contacts ATP. Positions 262-374 (NAAPPPSNTE…QTGNLKQELD (113 aa)) are disordered. A compositionally biased stretch (basic and acidic residues) spans 277 to 293 (TRPEAGAETRSPGKAEA). Phosphoserine occurs at positions 287 and 295. A compositionally biased stretch (acidic residues) spans 294–304 (ESDALPDDTVI). At Thr302 the chain carries Phosphothreonine. Lys370 participates in a covalent cross-link: Glycyl lysine isopeptide (Lys-Gly) (interchain with G-Cter in SUMO2). The DEAD box signature appears at 471 to 474 (DEAD). The Helicase C-terminal domain maps to 578-723 (YLYYFLMQYP…LFPVQTKYMD (146 aa)). Residues Lys624, Lys808, and Lys825 each participate in a glycyl lysine isopeptide (Lys-Gly) (interchain with G-Cter in SUMO2) cross-link. Composition is skewed to polar residues over residues 799–814 (PLFT…TQSG) and 823–834 (PSKSESALSCLS). The tract at residues 799–859 (PLFTESQKTK…EQPQPSTSAN (61 aa)) is disordered.

This sequence belongs to the DEAD box helicase family. DDX24/MAK5 subfamily. In terms of assembly, interacts with FADD. Interacts with RIPK1; this interaction disrupts RLR signaling activation of IFN-dependent transcription factor IRF7. Interacts with NIP7. Interacts with EP300; this interaction prevents TP53 acetylation mediated by EP300. Ubiquitinated by MDM2 without targeting DDX24 for proteasomal degradation. Instead, polyubiquitylated DDX24 promotes interaction with NIP7, a component of pre-rRNP processing complex, and associates with pre-rRNA molecules and pre-ribosomal particles.

It is found in the cytoplasm. The protein localises to the nucleus. The catalysed reaction is ATP + H2O = ADP + phosphate + H(+). Its function is as follows. ATP-dependent RNA helicase that plays a role in various aspects of RNA metabolism including pre-mRNA splicing and is thereby involved in different biological processes such as cell cycle regulation or innate immunity. Plays an inhibitory role in TP53 transcriptional activity and subsequently in TP53 controlled cell growth arrest and senescence by inhibiting its EP300 mediated acetylation. Negatively regulates cytosolic RNA-mediated innate immune signaling at least in part by affecting RIPK1/IRF7 interactions. Alternatively, possesses antiviral activity by recognizing gammaherpesvirus transcripts in the context of lytic reactivation. Plays an essential role in cell cycle regulation in vascular smooth muscle cells by interacting with and regulating FANCA (Fanconi anemia complementation group A) mRNA. This is ATP-dependent RNA helicase DDX24 (DDX24) from Pongo abelii (Sumatran orangutan).